Consider the following 291-residue polypeptide: MEKKRSMTAAPAVAMTAVSMVLTVVVIVMWLGEAMPWAVALVVGLGLDGGWLATLAYERRLAARGDHSRAITGVGWGFGAVATGVLVAHALGEESAGAWLAVAWLPLAAKALWLVHGLWERTALTPTALDQIRDIQQDARDRAAVARAQLRAEAGTEVTRLEAVTGAGARVARVQAETAGELASAWSTLEEAREGEGTARALTCVTSRVTPTSPPSWRLPVWGPTEPVPAAIEGSADVVPLSNEEIDGIMSGLVDSGSYRVAAGRFRDMGYSAGEARLQASWRRVTREVAA.

3 consecutive transmembrane segments (helical) span residues 24–44, 71–91, and 99–119; these read VVVI…LVVG, ITGV…AHAL, and WLAV…HGLW.

It is found in the cell membrane. Its function is as follows. Involved in plasmid transfer. The polypeptide is Protein SpdB (spdB) (Streptomyces lividans).